The primary structure comprises 470 residues: ATP synthase subunit beta (470 aa).

155-162 (GGAGVGKT) contributes to the ATP binding site.

The protein belongs to the ATPase alpha/beta chains family. In terms of assembly, F-type ATPases have 2 components, CF(1) - the catalytic core - and CF(0) - the membrane proton channel. CF(1) has five subunits: alpha(3), beta(3), gamma(1), delta(1), epsilon(1). CF(0) has three main subunits: a(1), b(2) and c(9-12). The alpha and beta chains form an alternating ring which encloses part of the gamma chain. CF(1) is attached to CF(0) by a central stalk formed by the gamma and epsilon chains, while a peripheral stalk is formed by the delta and b chains.

It is found in the cell membrane. It carries out the reaction ATP + H2O + 4 H(+)(in) = ADP + phosphate + 5 H(+)(out). In terms of biological role, produces ATP from ADP in the presence of a proton gradient across the membrane. The catalytic sites are hosted primarily by the beta subunits. The polypeptide is ATP synthase subunit beta (Lacticaseibacillus casei (Lactobacillus casei)).